A 389-amino-acid chain; its full sequence is S-adenosylmethionine synthase (389 aa).

His-17 lines the ATP pocket. Asp-19 lines the Mg(2+) pocket. Glu-45 provides a ligand contact to K(+). Residues Glu-58 and Gln-101 each contribute to the L-methionine site. Positions 101–111 are flexible loop; the sequence is QSPDIAQGVNP. ATP contacts are provided by residues 168 to 170, 234 to 235, Asp-243, 249 to 250, and Lys-270; these read DGK, RF, and RK. Asp-243 serves as a coordination point for L-methionine. Lys-274 lines the L-methionine pocket.

Belongs to the AdoMet synthase family. Homotetramer; dimer of dimers. Mg(2+) serves as cofactor. K(+) is required as a cofactor.

The protein localises to the cytoplasm. The catalysed reaction is L-methionine + ATP + H2O = S-adenosyl-L-methionine + phosphate + diphosphate. It functions in the pathway amino-acid biosynthesis; S-adenosyl-L-methionine biosynthesis; S-adenosyl-L-methionine from L-methionine: step 1/1. In terms of biological role, catalyzes the formation of S-adenosylmethionine (AdoMet) from methionine and ATP. The overall synthetic reaction is composed of two sequential steps, AdoMet formation and the subsequent tripolyphosphate hydrolysis which occurs prior to release of AdoMet from the enzyme. This is S-adenosylmethionine synthase from Syntrophobacter fumaroxidans (strain DSM 10017 / MPOB).